A 164-amino-acid polypeptide reads, in one-letter code: Small ribosomal subunit protein uS5 (164 aa).

The region spanning leucine 10–valine 73 is the S5 DRBM domain.

Belongs to the universal ribosomal protein uS5 family. In terms of assembly, part of the 30S ribosomal subunit. Contacts proteins S4 and S8.

Its function is as follows. With S4 and S12 plays an important role in translational accuracy. Located at the back of the 30S subunit body where it stabilizes the conformation of the head with respect to the body. In Streptococcus pyogenes serotype M1, this protein is Small ribosomal subunit protein uS5.